The following is a 255-amino-acid chain: Probable transcriptional regulatory protein CMS0715 (255 aa).

It belongs to the TACO1 family.

Its subcellular location is the cytoplasm. The chain is Probable transcriptional regulatory protein CMS0715 from Clavibacter sepedonicus (Clavibacter michiganensis subsp. sepedonicus).